The primary structure comprises 453 residues: MNIVILAAGTGKRMRSALPKVLHPLAGRPLLSHVIDTARALAPSRLVVVIGHGAEQVRAAVAAPDVQFAVQEQQLGTGHAVRQALPLLDPSQPTLVLYGDVPLTRTATLKRLADAATDARYGVLTVTLDDPTGYGRIVRDQAGCVTRIVEQKDASPDELRIDEINTGIVVAPTAQLSMWLGALGNDNAQGEYYLTDVVEQAIEAGFEIVTTQPDDGWETLGVNSKAQLAELERIHQRNLADALLAAGVTLADPARIDVRGTLACGRDVSIDVNCVFEGDVTLADGVTIGANCVIRHAAIAAGARVDAFSHLDGATVGANAVVGPYARLRPGAVLAADAHVGNFVEVKNATLGQGSKANHLTYLGDADIGARVNVGAGTITCNYDGANKFRTVIEDDVFVGSDTQFVAPVRVGRGVTVAAGTTVWKDVAADMLVLNDKTQTAKSGYVRPVKKKS.

Residues 1-225 (MNIVILAAGT…GWETLGVNSK (225 aa)) form a pyrophosphorylase region. UDP-N-acetyl-alpha-D-glucosamine is bound by residues 6-9 (LAAG), Lys20, Gln71, 76-77 (GT), 98-100 (YGD), Gly135, Glu150, Asn165, and Asn223. Asp100 contacts Mg(2+). Asn223 contacts Mg(2+). Residues 226 to 246 (AQLAELERIHQRNLADALLAA) are linker. An N-acetyltransferase region spans residues 247-453 (GVTLADPARI…GYVRPVKKKS (207 aa)). Arg329 and Lys347 together coordinate UDP-N-acetyl-alpha-D-glucosamine. Residue His359 is the Proton acceptor of the active site. UDP-N-acetyl-alpha-D-glucosamine contacts are provided by Tyr362 and Asn373. Acetyl-CoA contacts are provided by residues Ala376, 382 to 383 (NY), Ser401, and Ala419.

It in the N-terminal section; belongs to the N-acetylglucosamine-1-phosphate uridyltransferase family. In the C-terminal section; belongs to the transferase hexapeptide repeat family. As to quaternary structure, homotrimer. It depends on Mg(2+) as a cofactor.

It is found in the cytoplasm. It catalyses the reaction alpha-D-glucosamine 1-phosphate + acetyl-CoA = N-acetyl-alpha-D-glucosamine 1-phosphate + CoA + H(+). It carries out the reaction N-acetyl-alpha-D-glucosamine 1-phosphate + UTP + H(+) = UDP-N-acetyl-alpha-D-glucosamine + diphosphate. It functions in the pathway nucleotide-sugar biosynthesis; UDP-N-acetyl-alpha-D-glucosamine biosynthesis; N-acetyl-alpha-D-glucosamine 1-phosphate from alpha-D-glucosamine 6-phosphate (route II): step 2/2. Its pathway is nucleotide-sugar biosynthesis; UDP-N-acetyl-alpha-D-glucosamine biosynthesis; UDP-N-acetyl-alpha-D-glucosamine from N-acetyl-alpha-D-glucosamine 1-phosphate: step 1/1. It participates in bacterial outer membrane biogenesis; LPS lipid A biosynthesis. Functionally, catalyzes the last two sequential reactions in the de novo biosynthetic pathway for UDP-N-acetylglucosamine (UDP-GlcNAc). The C-terminal domain catalyzes the transfer of acetyl group from acetyl coenzyme A to glucosamine-1-phosphate (GlcN-1-P) to produce N-acetylglucosamine-1-phosphate (GlcNAc-1-P), which is converted into UDP-GlcNAc by the transfer of uridine 5-monophosphate (from uridine 5-triphosphate), a reaction catalyzed by the N-terminal domain. The sequence is that of Bifunctional protein GlmU from Burkholderia pseudomallei (strain K96243).